The primary structure comprises 177 residues: Large ribosomal subunit protein uL6 (177 aa).

Belongs to the universal ribosomal protein uL6 family. Part of the 50S ribosomal subunit.

Functionally, this protein binds to the 23S rRNA, and is important in its secondary structure. It is located near the subunit interface in the base of the L7/L12 stalk, and near the tRNA binding site of the peptidyltransferase center. The polypeptide is Large ribosomal subunit protein uL6 (Salmonella newport (strain SL254)).